Reading from the N-terminus, the 271-residue chain is 60 kDa heat shock protein, mitochondrial (271 aa).

2 positions are modified to phosphoserine: Ser-30 and Ser-33. 50-54 is a binding site for ATP; that stretch reads DGTTT. Lys-83 carries the N6-acetyllysine modification. An N6-acetyllysine; alternate mark is found at Lys-84, Lys-97, and Lys-112. An N6-succinyllysine; alternate mark is found at Lys-84, Lys-97, and Lys-112. N6-acetyllysine is present on Lys-125. Lys-126 bears the N6-acetyllysine; alternate mark. An N6-succinyllysine; alternate modification is found at Lys-126. Lys-145 is modified (N6-acetyllysine). N6-succinyllysine is present on Lys-175. Residues Lys-188 and Lys-237 each carry the N6-acetyllysine modification. Residue Gly-257 coordinates ATP. Residue Lys-270 is modified to N6-acetyllysine.

It belongs to the chaperonin (HSP60) family. As to quaternary structure, homoheptamer arranged in a ring structure. The functional units of these chaperonins consist of heptameric rings of the large subunit Hsp60, which function as a back-to-back double ring. Interacts with 2 heptameric Hsp10 rings to form the symmetrical football complex. Interacts with HRAS. Interacts with ATAD3A. Interacts with ETFBKMT and EEF1AKMT3. Interacts with MFHAS1. As to expression, detected at higher levels in caput epididymal spermatazoa than in cauda epididymal spermatazoa (at protein level).

The protein localises to the mitochondrion matrix. It catalyses the reaction ATP + H2O + a folded polypeptide = ADP + phosphate + an unfolded polypeptide.. Its function is as follows. Chaperonin implicated in mitochondrial protein import and macromolecular assembly. Together with Hsp10, facilitates the correct folding of imported proteins. May also prevent misfolding and promote the refolding and proper assembly of unfolded polypeptides generated under stress conditions in the mitochondrial matrix. The functional units of these chaperonins consist of heptameric rings of the large subunit Hsp60, which function as a back-to-back double ring. In a cyclic reaction, Hsp60 ring complexes bind one unfolded substrate protein per ring, followed by the binding of ATP and association with 2 heptameric rings of the co-chaperonin Hsp10. This leads to sequestration of the substrate protein in the inner cavity of Hsp60 where, for a certain period of time, it can fold undisturbed by other cell components. Synchronous hydrolysis of ATP in all Hsp60 subunits results in the dissociation of the chaperonin rings and the release of ADP and the folded substrate protein. In Mesocricetus auratus (Golden hamster), this protein is 60 kDa heat shock protein, mitochondrial.